The chain runs to 89 residues: Large ribosomal subunit protein bL27 (89 aa).

Residues 1–24 are disordered; that stretch reads MAHKKGTGSTRNGRDSNAKRLGVK.

The protein belongs to the bacterial ribosomal protein bL27 family.

The chain is Large ribosomal subunit protein bL27 from Synechococcus sp. (strain JA-2-3B'a(2-13)) (Cyanobacteria bacterium Yellowstone B-Prime).